The sequence spans 205 residues: StAR-related lipid transfer protein 4 (205 aa).

Positions 1–205 (MEGLSDVASF…NFYGDLRKAL (205 aa)) constitute an START domain.

The catalysed reaction is cholesterol(in) = cholesterol(out). In terms of biological role, involved in the intracellular transport of cholesterol. Binds cholesterol or other sterols. In Homo sapiens (Human), this protein is StAR-related lipid transfer protein 4 (STARD4).